We begin with the raw amino-acid sequence, 232 residues long: Ubiquinone biosynthesis O-methyltransferase (232 aa).

Positions 36, 55, 76, and 120 each coordinate S-adenosyl-L-methionine.

Belongs to the methyltransferase superfamily. UbiG/COQ3 family.

The catalysed reaction is a 3-demethylubiquinol + S-adenosyl-L-methionine = a ubiquinol + S-adenosyl-L-homocysteine + H(+). It catalyses the reaction a 3-(all-trans-polyprenyl)benzene-1,2-diol + S-adenosyl-L-methionine = a 2-methoxy-6-(all-trans-polyprenyl)phenol + S-adenosyl-L-homocysteine + H(+). Its pathway is cofactor biosynthesis; ubiquinone biosynthesis. In terms of biological role, O-methyltransferase that catalyzes the 2 O-methylation steps in the ubiquinone biosynthetic pathway. This is Ubiquinone biosynthesis O-methyltransferase from Pseudomonas aeruginosa (strain UCBPP-PA14).